A 414-amino-acid chain; its full sequence is Serine hydroxymethyltransferase (414 aa).

(6S)-5,6,7,8-tetrahydrofolate is bound by residues Leu-121 and 125–127; that span reads GHL. Lys-229 is subject to N6-(pyridoxal phosphate)lysine.

It belongs to the SHMT family. As to quaternary structure, homodimer. Requires pyridoxal 5'-phosphate as cofactor.

It localises to the cytoplasm. The enzyme catalyses (6R)-5,10-methylene-5,6,7,8-tetrahydrofolate + glycine + H2O = (6S)-5,6,7,8-tetrahydrofolate + L-serine. It functions in the pathway one-carbon metabolism; tetrahydrofolate interconversion. The protein operates within amino-acid biosynthesis; glycine biosynthesis; glycine from L-serine: step 1/1. Catalyzes the reversible interconversion of serine and glycine with tetrahydrofolate (THF) serving as the one-carbon carrier. This reaction serves as the major source of one-carbon groups required for the biosynthesis of purines, thymidylate, methionine, and other important biomolecules. Also exhibits THF-independent aldolase activity toward beta-hydroxyamino acids, producing glycine and aldehydes, via a retro-aldol mechanism. The sequence is that of Serine hydroxymethyltransferase from Polynucleobacter necessarius subsp. necessarius (strain STIR1).